A 350-amino-acid polypeptide reads, in one-letter code: Small ribosomal subunit biogenesis GTPase RsgA (350 aa).

Polar residues predominate over residues 1–17 (MSKNKLSKGQQRRVNAN). A disordered region spans residues 1-27 (MSKNKLSKGQQRRVNANHQRRLKTSAE). Positions 104–273 (TSVLTRPDFY…VIDSPGVREF (170 aa)) constitute a CP-type G domain. GTP contacts are provided by residues 160–163 (NKID) and 214–222 (GQSGVGKSS). The Zn(2+) site is built by Cys297, Cys302, His304, and Cys310.

The protein belongs to the TRAFAC class YlqF/YawG GTPase family. RsgA subfamily. Monomer. Associates with 30S ribosomal subunit, binds 16S rRNA. The cofactor is Zn(2+).

It is found in the cytoplasm. In terms of biological role, one of several proteins that assist in the late maturation steps of the functional core of the 30S ribosomal subunit. Helps release RbfA from mature subunits. May play a role in the assembly of ribosomal proteins into the subunit. Circularly permuted GTPase that catalyzes slow GTP hydrolysis, GTPase activity is stimulated by the 30S ribosomal subunit. The chain is Small ribosomal subunit biogenesis GTPase RsgA from Salmonella agona (strain SL483).